The chain runs to 512 residues: Probable multidrug resistance protein EmrY (512 aa).

The Cytoplasmic segment spans residues 1–8 (MAITKSTP). Residues 9 to 29 (APLTGGTLWCVTIALSLATFM) form a helical membrane-spanning segment. A topological domain (periplasmic) is located at residue Gln30. A helical transmembrane segment spans residues 31 to 51 (MLDSTISNVAIPTISGFLGAS). Residues 52-53 (TD) lie on the Cytoplasmic side of the membrane. Residues 54-74 (EGTWVITSFGVANAIAIPVTG) traverse the membrane as a helical segment. Over 75 to 84 (RLAQRIGELR) the chain is Periplasmic. The next 2 membrane-spanning stretches (helical) occupy residues 85–105 (LFLL…LSTN) and 106–126 (LDVL…LIPL). At 127–141 (SQSLLLRNYPPEKRT) the chain is on the periplasmic side. The chain crosses the membrane as a helical span at residues 142 to 162 (FALALWSMTVIIAPICGPILG). Over 163 to 172 (GYICDNFSWG) the chain is Cytoplasmic. The helical transmembrane segment at 173–193 (WIFLINVPMGIIVLTLCLTLL) threads the bilayer. The Periplasmic segment spans residues 194–204 (KGRETETSPVK). A helical transmembrane segment spans residues 205–225 (MNLPGLTLLVLGVGGLQIMLD). The Cytoplasmic portion of the chain corresponds to 226–234 (KGRDLDWFN). A helical membrane pass occupies residues 235 to 255 (SSTIIILTVVSVISLISLVIW). Residues 256 to 273 (ESTSENPILDLSLFKSRN) are Periplasmic-facing. Residues 274 to 294 (FTIGIVSITCAYLFYSGAIVL) form a helical membrane-spanning segment. At 295-307 (MPQLLQETMGYNA) the chain is on the cytoplasmic side. A helical membrane pass occupies residues 308-328 (IWAGLAYAPIGIMPLLISPLI). The Periplasmic portion of the chain corresponds to 329 to 338 (GRYGNKIDMR). The chain crosses the membrane as a helical span at residues 339–359 (LLVTFSFLMYAVCYYWRSVTF). At 360-364 (MPTID) the chain is on the cytoplasmic side. The chain crosses the membrane as a helical span at residues 365 to 385 (FTGIILPQFFQGFAVACFFLP). Residues 386 to 486 (LTTISFSGLP…LSISANEIFR (101 aa)) are Periplasmic-facing. The helical transmembrane segment at 487-507 (MAAIAFILLTVLVWFAKPPFT) threads the bilayer. Residues 508–512 (AKGVG) are Cytoplasmic-facing.

The protein belongs to the major facilitator superfamily. EmrB family. In terms of assembly, part of the tripartite efflux system EmrYK-TolC, which is composed of an inner membrane transporter, EmrY, a membrane fusion protein, EmrK, and an outer membrane component, TolC. The complex forms a large protein conduit and can translocate molecules across both the inner and outer membranes.

Its subcellular location is the cell inner membrane. In terms of biological role, part of the tripartite efflux system EmrYK-TolC, which confers resistance to various drugs. The polypeptide is Probable multidrug resistance protein EmrY (emrY) (Escherichia coli (strain K12)).